A 367-amino-acid chain; its full sequence is Polyenoic acids biosynthesis gene cluster protein Ba17b (367 aa).

The next 3 membrane-spanning stretches (helical) occupy residues 16 to 36 (LEVF…LRFY), 50 to 70 (WLII…IGAV), and 90 to 110 (LVAF…TEGL). The N-linked (GlcNAc...) asparagine glycan is linked to N133. A run of 3 helical transmembrane segments spans residues 137-157 (LVLV…CTPF), 183-203 (FPNI…VWGL), and 211-231 (LVLV…GGDS). Residue N245 is glycosylated (N-linked (GlcNAc...) asparagine). Residues 259-279 (LIIWTVCEPGVYLIAACLLVY) form a helical membrane-spanning segment.

Belongs to the SAT4 family.

The protein resides in the membrane. It participates in secondary metabolite biosynthesis. Its function is as follows. Part of the gene cluster that mediates the biosynthesis of (2Z,4E,6E,10E)-9-hydroxydodeca-2,4,6,10-tetraenoic acid (BAA), (2E,4E,6E,10E)-9-hydroxydodeca-2,4,6,10-tetraenoic acid (BAB), and (2Z,4E,6E)-octa-2,4,6-trienedioic acid (PBA). The highly reducing polyketide synthase Ba17a is sufficent to produce PBA and BAA. The still to be characterized protein Ba17b leads to an increased production of BAA as well as to the production of the new compound BAB. BAA does not possess insecticidal activity against G.mellonella larvae, however, both BAA and BAB increase the growth of Candida albicans and BAA can mitigate the fungicidal effects of fluconazole over C.albicans, suggesting that generalist pathogens such as M.anisopliae, can potentially manipulate the yeast microbiota found in arthropods (and anywhere else) by the activity of compounds as BAA and BAB. This Metarhizium anisopliae (Entomophthora anisopliae) protein is Polyenoic acids biosynthesis gene cluster protein Ba17b.